Consider the following 285-residue polypeptide: Bifunctional protein FolD (285 aa).

Residues 165–167, Ser190, and Ile231 contribute to the NADP(+) site; that span reads GRS.

It belongs to the tetrahydrofolate dehydrogenase/cyclohydrolase family. As to quaternary structure, homodimer.

It carries out the reaction (6R)-5,10-methylene-5,6,7,8-tetrahydrofolate + NADP(+) = (6R)-5,10-methenyltetrahydrofolate + NADPH. The enzyme catalyses (6R)-5,10-methenyltetrahydrofolate + H2O = (6R)-10-formyltetrahydrofolate + H(+). Its pathway is one-carbon metabolism; tetrahydrofolate interconversion. Functionally, catalyzes the oxidation of 5,10-methylenetetrahydrofolate to 5,10-methenyltetrahydrofolate and then the hydrolysis of 5,10-methenyltetrahydrofolate to 10-formyltetrahydrofolate. This chain is Bifunctional protein FolD, found in Verminephrobacter eiseniae (strain EF01-2).